Reading from the N-terminus, the 2439-residue chain is Protein roller-3 (2439 aa).

An N-terminal signal peptide occupies residues 1-26 (MLDFPRFSLFLFLLFSSFLFSSFVHA). Topologically, residues 27–1851 (ATVFSSSLKT…EEEKGGILPY (1825 aa)) are extracellular. Residues asparagine 64, asparagine 182, asparagine 334, asparagine 394, asparagine 496, asparagine 533, asparagine 657, asparagine 766, asparagine 868, asparagine 1003, asparagine 1036, asparagine 1090, and asparagine 1261 are each glycosylated (N-linked (GlcNAc...) asparagine). The Fibronectin type-III 1 domain maps to 618 to 720 (KPRIVAVSSI…STSNTALPDL (103 aa)). Fibronectin type-III domains follow at residues 1403-1503 (SKGI…TGFG), 1507-1628 (APRD…TLDV), 1629-1732 (PGTL…IQQA), and 1738-1843 (VPTA…EKEE). Asparagine 1567, asparagine 1636, asparagine 1677, and asparagine 1779 each carry an N-linked (GlcNAc...) asparagine glycan. Residues 1852 to 1872 (FLGISIILLLAAMILVGCFWL) traverse the membrane as a helical segment. Topologically, residues 1873-2439 (KSRRRQQMKK…GGTCRSVSQV (567 aa)) are cytoplasmic. One can recognise a Protein kinase domain in the interval 1928-2199 (VEIVRHISDC…ATILKIFETC (272 aa)). ATP is bound by residues 1934–1942 (ISDCSYGSV) and lysine 1963. Disordered regions lie at residues 2214–2277 (NEGS…RPAT), 2315–2348 (SQRP…NRTN), and 2412–2439 (HLRA…VSQV). 3 stretches are compositionally biased toward polar residues: residues 2216–2233 (GSDN…SSRE), 2334–2347 (ATSS…SNRT), and 2420–2439 (PPTR…VSQV).

Its subcellular location is the membrane. Involved in larval development and locomotion. This chain is Protein roller-3, found in Caenorhabditis briggsae.